Consider the following 149-residue polypeptide: MADQLTEEQIAEFKEAFSLFDKDGDGTITTKELGTVMRSLGQNPTEAELQDMINEVDADGNGTIDFPEFLTMMARKMKDTDSEEEIREAFRVFDKDGNGFISAAELRHVMTNLGEKLTDEEVDEMIREADVDGDGQVNYEEFVNMMTNK.

Ala-2 carries the post-translational modification N-acetylalanine. 4 EF-hand domains span residues 8 to 43 (EQIAEFKEAFSLFDKDGDGTITTKELGTVMRSLGQN), 44 to 79 (PTEAELQDMINEVDADGNGTIDFPEFLTMMARKMKD), 81 to 116 (DSEEEIREAFRVFDKDGNGFISAAELRHVMTNLGEK), and 117 to 149 (LTDEEVDEMIREADVDGDGQVNYEEFVNMMTNK). Ca(2+) contacts are provided by Asp-21, Asp-23, Asp-25, Thr-27, Glu-32, Asp-57, Asp-59, Asn-61, Thr-63, Glu-68, Asp-94, Asp-96, Asn-98, and Glu-105. Lys-116 is modified (N6,N6,N6-trimethyllysine). Asp-130, Asp-132, Asp-134, Gln-136, and Glu-141 together coordinate Ca(2+).

This sequence belongs to the calmodulin family.

Its function is as follows. Calmodulin mediates the control of a large number of enzymes, ion channels and other proteins by Ca(2+). Among the enzymes to be stimulated by the calmodulin-Ca(2+) complex are a number of protein kinases and phosphatases. This chain is Calmodulin, found in Ciona intestinalis (Transparent sea squirt).